A 778-amino-acid chain; its full sequence is Actin-binding LIM protein 1 (778 aa).

LIM zinc-binding domains lie at 97 to 156, 156 to 216, 224 to 283, and 283 to 343; these read IHCH…MYGT, TRCH…MSSS, SNCA…LFGV, and VKCE…TKTE. Ser216 is subject to Phosphoserine. Positions 339–370 are disordered; it reads STKTEEKLRPTRTSSESIYSRPGSSIPGSPGH. The segment covering 360-369 has biased composition (low complexity); that stretch reads PGSSIPGSPG. The residue at position 367 (Ser367) is a Phosphoserine. A phosphotyrosine mark is found at Tyr373 and Tyr396. Disordered stretches follow at residues 414-510 and 552-597; these read YDDK…QAPK and AAQA…EELL. A phosphoserine mark is found at Ser422, Ser426, and Ser431. Polar residues predominate over residues 423 to 434; it reads LGESPRTLSPTP. Thr433 carries the post-translational modification Phosphothreonine. Position 435 is a phosphoserine (Ser435). Tyr439 is modified (phosphotyrosine). Over residues 449 to 474 the composition is skewed to polar residues; that stretch reads RSTSQGSINSPVYSRHSYTPTTSRSP. A phosphoserine mark is found at Ser452, Ser455, Ser458, Ser498, and Ser587. Residues 590–614 are a coiled coil; that stretch reads EEDDEELLRRRQLQEEQLMKLNSGL. A Glycyl lysine isopeptide (Lys-Gly) (interchain with G-Cter in SUMO2) cross-link involves residue Lys620. Phosphoserine occurs at positions 640, 655, 677, and 706. The HP domain maps to 710–778; that stretch reads MLEPKIFPYE…NDMKKKAKLF (69 aa).

Binds F-actin. Interacts with ABRA. Detected in liver, heart, skeletal muscle, brain and retina, where it is concentrated in the inner segment and in the outer plexiform layers.

It is found in the cytoplasm. The protein resides in the cytoskeleton. Its function is as follows. May act as scaffold protein. May play a role in the development of the retina. Has been suggested to play a role in axon guidance. The polypeptide is Actin-binding LIM protein 1 (ABLIM1) (Homo sapiens (Human)).